Consider the following 350-residue polypeptide: Purine-rich element-binding protein gamma (350 aa).

2 disordered regions span residues 1-59 and 136-172; these read MERA…GTSE and GHRQ…HPHS. Gly residues predominate over residues 9–27; it reads GGGSGGGRGRGGKNVGGPG. Residues 47–59 show a composition bias toward polar residues; it reads ASATPNQSGGTSE. A DNA-binding region spans residues 54 to 296; sequence SGGTSEIQEL…GIFLKVSEVR (243 aa). Residues 137 to 149 are compositionally biased toward basic and acidic residues; sequence HRQEHGQSKEQVS. A phosphoserine mark is found at S163, S166, and S342.

Belongs to the PUR DNA-binding protein family. As to expression, isoform 1 is expressed in testis. Isoform 2 is expressed in blastocyst and kidney.

It localises to the nucleus. This is Purine-rich element-binding protein gamma (Purg) from Mus musculus (Mouse).